We begin with the raw amino-acid sequence, 263 residues long: Small ribosomal subunit protein uS2 (263 aa).

Belongs to the universal ribosomal protein uS2 family. In terms of assembly, component of the small ribosomal subunit. Mature ribosomes consist of a small (40S) and a large (60S) subunit. The 40S subunit contains about 33 different proteins and 1 molecule of RNA (18S). The 60S subunit contains about 49 different proteins and 3 molecules of RNA (25S, 5.8S and 5S). Interacts with RPS21.

It localises to the cytoplasm. In terms of biological role, required for the assembly and/or stability of the 40S ribosomal subunit. Required for the processing of the 20S rRNA-precursor to mature 18S rRNA in a late step of the maturation of 40S ribosomal subunits. The chain is Small ribosomal subunit protein uS2 from Vairimorpha ceranae (strain BRL01) (Microsporidian parasite).